We begin with the raw amino-acid sequence, 234 residues long: Nitroreductase NfnB (234 aa).

25 to 29 is a binding site for FMN; sequence RRAVR. NADP(+) contacts are provided by Ser55, Arg105, Tyr113, and Ile118. Residues Tyr137, 181-182, and Arg223 contribute to the FMN site; that span reads AL.

It belongs to the nitroreductase family. In terms of assembly, homodimer. FMN serves as cofactor.

Confers resistance to antitubercular drugs benzothiazinone (BTZ) and dinitrobenzamide (DNB). Inactivates BTZ and DNB by reducing an essential nitro group of these compounds to amino group or to hydroxyl amine, respectively, using NADH or NADPH as source of reducing equivalents; two electrons are transferred. Able to reduce the nitro group of bicyclic nitroimidazole PA-824, but not of quinone menadione, nitrofurazone, methyl-4-nitrobenzoate, 4-nitrobenzene methyl sulfonate or 4-nitroacetophenone. The chain is Nitroreductase NfnB from Mycolicibacterium smegmatis (strain ATCC 700084 / mc(2)155) (Mycobacterium smegmatis).